The sequence spans 89 residues: Large ribosomal subunit protein bL27 (89 aa).

The disordered stretch occupies residues 1–21 (MAHKKAGGSSRNGRDSKGKRL).

It belongs to the bacterial ribosomal protein bL27 family.

This chain is Large ribosomal subunit protein bL27, found in Bradyrhizobium diazoefficiens (strain JCM 10833 / BCRC 13528 / IAM 13628 / NBRC 14792 / USDA 110).